A 345-amino-acid chain; its full sequence is tRNA dimethylallyltransferase (345 aa).

Position 9-16 (9-16 (GPTASGKS)) interacts with ATP. Residue 11–16 (TASGKS) participates in substrate binding. Interaction with substrate tRNA regions lie at residues 34-37 (DSMQ) and 195-199 (QRMIR).

The protein belongs to the IPP transferase family. Monomer. The cofactor is Mg(2+).

The catalysed reaction is adenosine(37) in tRNA + dimethylallyl diphosphate = N(6)-dimethylallyladenosine(37) in tRNA + diphosphate. Catalyzes the transfer of a dimethylallyl group onto the adenine at position 37 in tRNAs that read codons beginning with uridine, leading to the formation of N6-(dimethylallyl)adenosine (i(6)A). This is tRNA dimethylallyltransferase from Orientia tsutsugamushi (strain Ikeda) (Rickettsia tsutsugamushi).